Consider the following 410-residue polypeptide: Sorting nexin-4 (410 aa).

Positions 11–135 (FIIVSDPQKQ…TFLVSSDWDA (125 aa)) constitute a PX domain. 4 residues coordinate a 1,2-diacyl-sn-glycero-3-phospho-(1D-myo-inositol-3-phosphate): Arg-58, Ser-60, Lys-84, and Arg-101. A coiled-coil region spans residues 329–368 (NQEAARREKISKLESKVQALTTEVENAKKVADAFEKEALK).

The protein belongs to the sorting nexin family.

Its subcellular location is the cytoplasm. The protein localises to the cytosol. It localises to the preautophagosomal structure membrane. The protein resides in the endosome membrane. Sorting nexin, involved in the separation or division of vacuoles throughout the entire life cycle of the cells. Involved in retrieval of late-Golgi SNAREs from post-Golgi endosomes to the trans-Golgi network, for cytoplasm to vacuole transport (Cvt), and autophagy of large cargos including mitophagy, pexophagy and glycophagy. This is Sorting nexin-4 (SNX4) from Eremothecium gossypii (strain ATCC 10895 / CBS 109.51 / FGSC 9923 / NRRL Y-1056) (Yeast).